Here is a 315-residue protein sequence, read N- to C-terminus: MQIKLANPRGFCAGVDRAIEIVNRALEVFGPPIYVRHEVVHNKFVVEDLRNRGAIFVEELDQVPDDVIVIFSAHGVSQAVRQEAAGRGLKVFDATCPLVTKVHIEVAKYSRDGRECILIGHEGHPEVEGTMGQYDASNGGAIYLVEDEEDVANLQVRDPNHLAFVTQTTLSMDDTSRVIDALRARFPNIGGPRKDDICYATQNRQDAVKQLAGESDVVLVVGSPNSSNSNRLRELAERMGTPAYLIDGAEDMQRGWFDQTARIGITAGASAPEVLVRGVIEQLKAWGATGAEELDGREENITFSMPKELRVRSLI.

Cysteine 12 lines the [4Fe-4S] cluster pocket. Histidine 41 and histidine 74 together coordinate (2E)-4-hydroxy-3-methylbut-2-enyl diphosphate. Dimethylallyl diphosphate is bound by residues histidine 41 and histidine 74. Isopentenyl diphosphate contacts are provided by histidine 41 and histidine 74. Residue cysteine 96 participates in [4Fe-4S] cluster binding. Histidine 124 contributes to the (2E)-4-hydroxy-3-methylbut-2-enyl diphosphate binding site. Position 124 (histidine 124) interacts with dimethylallyl diphosphate. Position 124 (histidine 124) interacts with isopentenyl diphosphate. The active-site Proton donor is glutamate 126. Threonine 168 contacts (2E)-4-hydroxy-3-methylbut-2-enyl diphosphate. [4Fe-4S] cluster is bound at residue cysteine 198. Positions 226, 227, 228, and 270 each coordinate (2E)-4-hydroxy-3-methylbut-2-enyl diphosphate. Dimethylallyl diphosphate contacts are provided by serine 226, serine 227, asparagine 228, and serine 270. The isopentenyl diphosphate site is built by serine 226, serine 227, asparagine 228, and serine 270.

It belongs to the IspH family. The cofactor is [4Fe-4S] cluster.

The enzyme catalyses isopentenyl diphosphate + 2 oxidized [2Fe-2S]-[ferredoxin] + H2O = (2E)-4-hydroxy-3-methylbut-2-enyl diphosphate + 2 reduced [2Fe-2S]-[ferredoxin] + 2 H(+). It catalyses the reaction dimethylallyl diphosphate + 2 oxidized [2Fe-2S]-[ferredoxin] + H2O = (2E)-4-hydroxy-3-methylbut-2-enyl diphosphate + 2 reduced [2Fe-2S]-[ferredoxin] + 2 H(+). The protein operates within isoprenoid biosynthesis; dimethylallyl diphosphate biosynthesis; dimethylallyl diphosphate from (2E)-4-hydroxy-3-methylbutenyl diphosphate: step 1/1. It functions in the pathway isoprenoid biosynthesis; isopentenyl diphosphate biosynthesis via DXP pathway; isopentenyl diphosphate from 1-deoxy-D-xylulose 5-phosphate: step 6/6. Its function is as follows. Catalyzes the conversion of 1-hydroxy-2-methyl-2-(E)-butenyl 4-diphosphate (HMBPP) into a mixture of isopentenyl diphosphate (IPP) and dimethylallyl diphosphate (DMAPP). Acts in the terminal step of the DOXP/MEP pathway for isoprenoid precursor biosynthesis. The chain is 4-hydroxy-3-methylbut-2-enyl diphosphate reductase from Pseudomonas putida (strain ATCC 700007 / DSM 6899 / JCM 31910 / BCRC 17059 / LMG 24140 / F1).